A 246-amino-acid polypeptide reads, in one-letter code: Large ribosomal subunit protein uL2 (246 aa).

A disordered region spans residues 197 to 226 (SPYAHPHGGGSHPKGGTPVPKTAPPGQKVG).

The protein belongs to the universal ribosomal protein uL2 family. Part of the 50S ribosomal subunit. Forms a bridge to the 30S subunit in the 70S ribosome.

One of the primary rRNA binding proteins. Required for association of the 30S and 50S subunits to form the 70S ribosome, for tRNA binding and peptide bond formation. It has been suggested to have peptidyltransferase activity; this is somewhat controversial. Makes several contacts with the 16S rRNA in the 70S ribosome. In Pyrobaculum islandicum (strain DSM 4184 / JCM 9189 / GEO3), this protein is Large ribosomal subunit protein uL2.